Reading from the N-terminus, the 1602-residue chain is Calmodulin-regulated spectrin-associated protein 1 (1602 aa).

The region spanning 216 to 331 (ESPAHQKVRY…FIAELFWWFE (116 aa)) is the Calponin-homology (CH) domain. Ser217, Ser371, Ser375, Ser416, and Ser431 each carry phosphoserine. The segment at 426–471 (QKQQKSIQGEDIPDQRHRSNSLTRVDGQPRGAAIAWPEKKTRPASQ) is disordered. Thr512 carries the phosphothreonine modification. Residues Ser563, Ser575, and Ser589 each carry the phosphoserine modification. Residues 603 to 620 (AKEKQVITKEDERGEGRP) show a composition bias toward basic and acidic residues. The disordered stretch occupies residues 603-637 (AKEKQVITKEDERGEGRPRSIVSRRPSEGPQPLVR). Ser629, Ser722, Ser728, Ser738, and Ser740 each carry phosphoserine. Positions 772-789 (KLQEDMKVKEHEDKDDAS) are enriched in basic and acidic residues. Disordered regions lie at residues 772–808 (KLQE…VSMA) and 825–870 (LNSC…GKDP). Composition is skewed to low complexity over residues 797–808 (STASQMSSVSMA) and 830–841 (TKSSTSSSQKTT). A compositionally biased stretch (basic and acidic residues) spans 857–869 (QKREQSPSQHGKD). The tract at residues 871-892 (ASLLASELVQLHMQLEEKRRAI) is sufficient for interaction with SPTBN1. Coiled coils occupy residues 873–909 (LLAS…QRLK) and 1016–1048 (DVNE…QEQL). A sufficient for interaction with calmodulin region spans residues 903–922 (SARQRLKLGKAAFLHVVKKG). Disordered stretches follow at residues 1075–1165 (FVEP…GKCL), 1206–1226 (KEVG…VEEP), and 1301–1448 (ARVR…DWET). Ser1080 is modified (phosphoserine). Positions 1103 to 1114 (RPAELKVPKDRP) are enriched in basic and acidic residues. Residues 1115 to 1127 (QGSSRSKTPTPSV) show a composition bias toward polar residues. Residues 1206 to 1220 (KEVGSSSSDVSGKES) are compositionally biased toward low complexity. Residues 1291-1343 (LLKQQRKAEEARVRKQQLEAEVELKRDEARRKAEEDRVRKEEEKARRELIKQE) are a coiled coil. Over residues 1301–1346 (ARVRKQQLEAEVELKRDEARRKAEEDRVRKEEEKARRELIKQEYLR) the composition is skewed to basic and acidic residues. A compositionally biased stretch (basic residues) spans 1361-1372 (PKSKPKKPRPKS). Residues 1380–1392 (SDSGTKCSSTPDN) show a composition bias toward polar residues. Low complexity predominate over residues 1393–1410 (LSRTQSGSSLSLASAATT). A phosphoserine mark is found at Ser1398 and Ser1427. One can recognise a CKK domain in the interval 1463–1597 (GPKLFKEPSS…QPKRPAVPKK (135 aa)). Tyr1537 is modified (phosphotyrosine).

Belongs to the CAMSAP1 family. In terms of assembly, interacts with spectrin via SPTBN1; the interaction is direct. Interacts with calmodulin; calcium-dependent it prevents interaction with spectrin.

Its subcellular location is the cytoplasm. The protein resides in the cytoskeleton. Functionally, key microtubule-organizing protein that specifically binds the minus-end of non-centrosomal microtubules and regulates their dynamics and organization. Specifically recognizes growing microtubule minus-ends and stabilizes microtubules. Acts on free microtubule minus-ends that are not capped by microtubule-nucleating proteins or other factors and protects microtubule minus-ends from depolymerization. In contrast to CAMSAP2 and CAMSAP3, tracks along the growing tips of minus-end microtubules without significantly affecting the polymerization rate: binds at the very tip of the microtubules minus-end and acts as a minus-end tracking protein (-TIP) that dissociates from microtubules after allowing tubulin incorporation. Through interaction with spectrin may regulate neurite outgrowth. This is Calmodulin-regulated spectrin-associated protein 1 (CAMSAP1) from Homo sapiens (Human).